A 979-amino-acid chain; its full sequence is Translation initiation factor IF-2 (979 aa).

Residues 68–392 (VKQKQGTPAS…SRAAQDAMEL (325 aa)) form a disordered region. Basic and acidic residues-rich tracts occupy residues 102 to 179 (QDMR…KPEE), 217 to 229 (EMEKKEDTEEVFR), and 260 to 273 (TKEDRQREQNDADG). Positions 309–326 (PSGNKNNNRPAQQQSNAS) are enriched in polar residues. Positions 347–356 (DVQRQVKETL) are enriched in basic and acidic residues. Residues 478-646 (ARPPIVTVMG…KVLLEADILE (169 aa)) enclose the tr-type G domain. A G1 region spans residues 487–494 (GHVDHGKT). 487-494 (GHVDHGKT) is a binding site for GTP. The segment at 512 to 516 (GITQH) is G2. The tract at residues 534 to 537 (DTPG) is G3. Residues 534–538 (DTPGH) and 588–591 (NKID) each bind GTP. Residues 588-591 (NKID) are G4. A G5 region spans residues 624 to 626 (SAK).

Belongs to the TRAFAC class translation factor GTPase superfamily. Classic translation factor GTPase family. IF-2 subfamily.

It is found in the cytoplasm. Its function is as follows. One of the essential components for the initiation of protein synthesis. Protects formylmethionyl-tRNA from spontaneous hydrolysis and promotes its binding to the 30S ribosomal subunits. Also involved in the hydrolysis of GTP during the formation of the 70S ribosomal complex. The sequence is that of Translation initiation factor IF-2 from Porphyromonas gingivalis (strain ATCC 33277 / DSM 20709 / CIP 103683 / JCM 12257 / NCTC 11834 / 2561).